The chain runs to 468 residues: Cysteine--tRNA ligase (468 aa).

Residue Cys-28 participates in Zn(2+) binding. A 'HIGH' region motif is present at residues 30–40 (PTVYNYIHIGN). 3 residues coordinate Zn(2+): Cys-212, His-237, and Glu-241. Residues 271–275 (KMSKS) carry the 'KMSKS' region motif. Residue Lys-274 coordinates ATP.

This sequence belongs to the class-I aminoacyl-tRNA synthetase family. As to quaternary structure, monomer. Zn(2+) serves as cofactor.

Its subcellular location is the cytoplasm. It catalyses the reaction tRNA(Cys) + L-cysteine + ATP = L-cysteinyl-tRNA(Cys) + AMP + diphosphate. This Lacticaseibacillus casei (strain BL23) (Lactobacillus casei) protein is Cysteine--tRNA ligase.